The following is a 513-amino-acid chain: Serine/threonine-protein kinase ppk8 (513 aa).

Low complexity predominate over residues 98 to 114 (LSSTLTSMSEESSSTES). Residues 98-120 (LSSTLTSMSEESSSTESKFATLN) are disordered. One can recognise a Protein kinase domain in the interval 241–505 (GKLNNVIGEG…ISGARSTTWM (265 aa)). ATP is bound by residues 247 to 255 (IGEGASSFI) and Lys270. Asp364 serves as the catalytic Proton acceptor.

The protein belongs to the protein kinase superfamily. Ser/Thr protein kinase family.

The protein resides in the cytoplasm. It is found in the nucleus. It catalyses the reaction L-seryl-[protein] + ATP = O-phospho-L-seryl-[protein] + ADP + H(+). It carries out the reaction L-threonyl-[protein] + ATP = O-phospho-L-threonyl-[protein] + ADP + H(+). In Schizosaccharomyces pombe (strain 972 / ATCC 24843) (Fission yeast), this protein is Serine/threonine-protein kinase ppk8 (ppk8).